We begin with the raw amino-acid sequence, 232 residues long: Purine nucleoside phosphorylase DeoD-type (232 aa).

His-4 is an a purine D-ribonucleoside binding site. Phosphate-binding positions include Gly-20, Arg-24, Arg-43, and 87–90; that span reads RVGS. Residues Glu-162, 178-180, and 202-203 each bind a purine D-ribonucleoside; these read EME and SD. Asp-203 acts as the Proton donor in catalysis.

It belongs to the PNP/UDP phosphorylase family. Homohexamer; trimer of homodimers.

It catalyses the reaction a purine D-ribonucleoside + phosphate = a purine nucleobase + alpha-D-ribose 1-phosphate. It carries out the reaction a purine 2'-deoxy-D-ribonucleoside + phosphate = a purine nucleobase + 2-deoxy-alpha-D-ribose 1-phosphate. Catalyzes the reversible phosphorolytic breakdown of the N-glycosidic bond in the beta-(deoxy)ribonucleoside molecules, with the formation of the corresponding free purine bases and pentose-1-phosphate. The polypeptide is Purine nucleoside phosphorylase DeoD-type (Bacillus velezensis (strain DSM 23117 / BGSC 10A6 / LMG 26770 / FZB42) (Bacillus amyloliquefaciens subsp. plantarum)).